Consider the following 603-residue polypeptide: Polypeptide N-acetylgalactosaminyltransferase 10 (603 aa).

Residues 1–11 (MRRKEKRLLQA) are Cytoplasmic-facing. A helical; Signal-anchor for type II membrane protein transmembrane segment spans residues 12 to 31 (VALVLAALVLLPNVGLWALY). At 32–603 (RERQPDGTPG…STVLEKFNRN (572 aa)) the chain is on the lumenal side. The disordered stretch occupies residues 38 to 59 (GTPGGSGAAVAPAAGQGSHSRQ). The span at 45–55 (AAVAPAAGQGS) shows a compositional bias: low complexity. 2 N-linked (GlcNAc...) asparagine glycosylation sites follow: N124 and N146. 5 disulfide bridges follow: C135–C365, C356–C432, C471–C488, C523–C538, and C563–C578. The catalytic subdomain A stretch occupies residues 144–253 (LPNTSIIIPF…VNWLPPLLDR (110 aa)). Positions 154, 156, 185, and 214 each coordinate substrate. Position 237 (D237) interacts with Mn(2+). S238 serves as a coordination point for substrate. Mn(2+) is bound at residue H239. Positions 311 to 373 (PFESPVMAGG…PCSRVGHIYR (63 aa)) are catalytic subdomain B. W342 serves as a coordination point for substrate. A Mn(2+)-binding site is contributed by H370. R373 and Y378 together coordinate substrate. The flexible loop stretch occupies residues 373-384 (RKYVPYKVPAGV). Positions 458 to 590 (AAWGEIRNVG…SSLTQQWLFE (133 aa)) constitute a Ricin B-type lectin domain. The N-linked (GlcNAc...) asparagine glycan is linked to N593.

This sequence belongs to the glycosyltransferase 2 family. GalNAc-T subfamily. The cofactor is Mn(2+). Widely expressed. Expressed at high level in small intestine, and at intermediate levels in stomach, pancreas, ovary, thyroid gland and spleen. Weakly expressed in other tissues.

It is found in the golgi apparatus membrane. It carries out the reaction L-seryl-[protein] + UDP-N-acetyl-alpha-D-galactosamine = a 3-O-[N-acetyl-alpha-D-galactosaminyl]-L-seryl-[protein] + UDP + H(+). The catalysed reaction is L-threonyl-[protein] + UDP-N-acetyl-alpha-D-galactosamine = a 3-O-[N-acetyl-alpha-D-galactosaminyl]-L-threonyl-[protein] + UDP + H(+). It functions in the pathway protein modification; protein glycosylation. Its function is as follows. Catalyzes the initial reaction in O-linked oligosaccharide biosynthesis, the transfer of an N-acetyl-D-galactosamine residue to a serine or threonine residue on the protein receptor. Has activity toward Muc5Ac and EA2 peptide substrates. In Homo sapiens (Human), this protein is Polypeptide N-acetylgalactosaminyltransferase 10 (GALNT10).